Consider the following 231-residue polypeptide: ADP-ribose pyrophosphatase (231 aa).

An N-acetylserine modification is found at Phe2. Substrate is bound by residues Trp46, 64–65, Arg69, and Arg103; that span reads WD. The Nudix hydrolase domain occupies 75–214; that stretch reads GGVDGIGILT…DQQGYKLDAR (140 aa). Ala115 lines the Mg(2+) pocket. The Nudix box motif lies at 116 to 137; the sequence is GLIDAGEDIDTAALRELKEETG. Residue Leu117 participates in substrate binding. Mg(2+) is bound by residues Glu131 and Glu135. Residue Asp152 coordinates substrate. A Mg(2+)-binding site is contributed by Glu185.

This sequence belongs to the Nudix hydrolase family. NudF subfamily. Requires Mg(2+) as cofactor. Mn(2+) is required as a cofactor.

The enzyme catalyses ADP-D-ribose + H2O = D-ribose 5-phosphate + AMP + 2 H(+). This chain is ADP-ribose pyrophosphatase (YSA1), found in Saccharomyces cerevisiae (strain ATCC 204508 / S288c) (Baker's yeast).